A 103-amino-acid polypeptide reads, in one-letter code: Histone H4 (103 aa).

Residues 1 to 14 are compositionally biased toward gly residues; that stretch reads MSGRGKGGKGLGKG. The tract at residues 1–20 is disordered; it reads MSGRGKGGKGLGKGGAKRHR. At S2 the chain carries N-acetylserine. Residues K6 and K13 each carry the N6-acetyl-N6-methyllysine; alternate modification. Position 17 is an N6-acetyllysine (K17). The DNA-binding element occupies 17–21; it reads KRHRK. N6-methyllysine is present on K21.

The protein belongs to the histone H4 family. As to quaternary structure, the nucleosome is a histone octamer containing two molecules each of H2A, H2B, H3 and H4 assembled in one H3-H4 heterotetramer and two H2A-H2B heterodimers. The octamer wraps approximately 147 bp of DNA.

It is found in the nucleus. The protein resides in the chromosome. Core component of nucleosome. Nucleosomes wrap and compact DNA into chromatin, limiting DNA accessibility to the cellular machineries which require DNA as a template. Histones thereby play a central role in transcription regulation, DNA repair, DNA replication and chromosomal stability. DNA accessibility is regulated via a complex set of post-translational modifications of histones, also called histone code, and nucleosome remodeling. This Dendronephthya klunzingeri (Klunzinger's soft coral) protein is Histone H4 (H4DEKL).